Consider the following 110-residue polypeptide: UPF0060 membrane protein Francci3_2786 (110 aa).

4 consecutive transmembrane segments (helical) span residues 8–28 (LLFV…WQGV), 33–53 (GPVW…VATL), 62–82 (ILAA…VAVD), and 87–107 (DRYD…IMYA).

The protein belongs to the UPF0060 family.

The protein localises to the cell membrane. This is UPF0060 membrane protein Francci3_2786 from Frankia casuarinae (strain DSM 45818 / CECT 9043 / HFP020203 / CcI3).